The following is a 557-amino-acid chain: Hydroxylamine reductase (557 aa).

[4Fe-4S] cluster-binding residues include cysteine 4, cysteine 7, cysteine 19, and cysteine 26. 8 residues coordinate hybrid [4Fe-2O-2S] cluster: histidine 253, glutamate 277, cysteine 321, cysteine 408, cysteine 436, cysteine 461, glutamate 495, and lysine 497. At cysteine 408 the chain carries Cysteine persulfide.

Belongs to the HCP family. It depends on [4Fe-4S] cluster as a cofactor. The cofactor is hybrid [4Fe-2O-2S] cluster.

It localises to the cytoplasm. The enzyme catalyses A + NH4(+) + H2O = hydroxylamine + AH2 + H(+). Catalyzes the reduction of hydroxylamine to form NH(3) and H(2)O. This is Hydroxylamine reductase from Acidithiobacillus ferrooxidans (strain ATCC 53993 / BNL-5-31) (Leptospirillum ferrooxidans (ATCC 53993)).